We begin with the raw amino-acid sequence, 860 residues long: Ubiquitin carboxyl-terminal hydrolase 13 (860 aa).

A UBP-type; degenerate zinc finger spans residues 168-276; the sequence is QVSRHARSLR…EHLLHFGIDM (109 aa). Zn(2+)-binding residues include Cys192, Cys195, Cys212, and His225. Residues 318 to 857 form the USP domain; it reads TGIKNLGNSC…LGYMYFYRRL (540 aa). Catalysis depends on Cys327, which acts as the Nucleophile. The disordered stretch occupies residues 611 to 636; the sequence is DLTPPIVIPEDTRDSSTNNSLESPEI. 2 UBA domains span residues 635–676 and 710–750; these read EIDE…IIAH and QPPE…IFTH. Acidic residues predominate over residues 755–768; it reads DESEAMSDTADTEP. Positions 755–795 are disordered; it reads DESEAMSDTADTEPNDNSFSNANAHTDSSLSPDQDLSSPRV. Polar residues predominate over residues 769–780; that stretch reads NDNSFSNANAHT. Over residues 781 to 793 the composition is skewed to low complexity; that stretch reads DSSLSPDQDLSSP. Residue His819 is the Proton acceptor of the active site.

It belongs to the peptidase C19 family.

It catalyses the reaction Thiol-dependent hydrolysis of ester, thioester, amide, peptide and isopeptide bonds formed by the C-terminal Gly of ubiquitin (a 76-residue protein attached to proteins as an intracellular targeting signal).. Its activity is regulated as follows. Specifically inhibited by spautin-1 (specific and potent autophagy inhibitor-1), a derivative of MBCQ that binds to usp13 and inhibits deubiquitinase activity. Its function is as follows. Deubiquitinase that mediates deubiquitination of target proteins and is involved in various processes such as autophagy and endoplasmic reticulum-associated degradation (ERAD). This Danio rerio (Zebrafish) protein is Ubiquitin carboxyl-terminal hydrolase 13 (usp13).